A 299-amino-acid chain; its full sequence is uncharacterized protein (299 aa).

It belongs to the glycosyltransferase 2 family.

This is an uncharacterized protein from Mycoplasma pneumoniae (strain ATCC 29342 / M129 / Subtype 1) (Mycoplasmoides pneumoniae).